Here is a 417-residue protein sequence, read N- to C-terminus: UDP-N-acetylglucosamine 1-carboxyvinyltransferase (417 aa).

22–23 (KN) is a binding site for phosphoenolpyruvate. UDP-N-acetyl-alpha-D-glucosamine is bound at residue Arg93. Cys117 serves as the catalytic Proton donor. Cys117 is modified (2-(S-cysteinyl)pyruvic acid O-phosphothioketal). UDP-N-acetyl-alpha-D-glucosamine-binding positions include 122–126 (RPVDQ), Asp305, and Ile327.

This sequence belongs to the EPSP synthase family. MurA subfamily.

The protein localises to the cytoplasm. The catalysed reaction is phosphoenolpyruvate + UDP-N-acetyl-alpha-D-glucosamine = UDP-N-acetyl-3-O-(1-carboxyvinyl)-alpha-D-glucosamine + phosphate. The protein operates within cell wall biogenesis; peptidoglycan biosynthesis. In terms of biological role, cell wall formation. Adds enolpyruvyl to UDP-N-acetylglucosamine. The chain is UDP-N-acetylglucosamine 1-carboxyvinyltransferase from Nitrosomonas europaea (strain ATCC 19718 / CIP 103999 / KCTC 2705 / NBRC 14298).